The primary structure comprises 296 residues: MPVDTLSPGAPATPALPFRLRTKVPGYLLPRPADGGARKPSAVERLEADKAKYVKSLRVANTRQEPVQPPLVRQPLFSPGPRGPVLTPSRRVLPCSGRRPQLDLDILSSLINLCDSPVSPSEASRTPGRPEGSAHKVPPATPPRPPPSTVAVRRVDVRPLPASPARPYPSPGTTTTSSPGRPPGLQRSKSDLSERFSRAAADLERFFNFCGLDPEEARGLGVAHLARASSDIVSLAGPSAGPCSSEGGCSRRSSATVEERSLDRVPYGVSVIERNARVIKWLYGLRQARDPPTTEG.

Disordered regions lie at residues 61–97 (NTRQ…PCSG) and 117–192 (PVSP…KSDL). Composition is skewed to pro residues over residues 139–148 (PATPPRPPPS) and 161–170 (PASPARPYPS).

This sequence belongs to the FAM110 family. As to quaternary structure, may interact with CSPP1.

It is found in the cytoplasm. The protein localises to the cytoskeleton. The protein resides in the microtubule organizing center. Its subcellular location is the centrosome. It localises to the spindle pole. The polypeptide is Protein FAM110A (Fam110a) (Mus musculus (Mouse)).